A 260-amino-acid chain; its full sequence is Small ribosomal subunit protein uS3 (260 aa).

Residues 39-114 enclose the KH type-2 domain; that stretch reads LRQYIEQKLG…QIRINVVEVQ (76 aa). Residues 219 to 260 are disordered; the sequence is EVAAPPPSTRDRDRDRGDRDREPRRRQQQRRRQQFEDRSNEG. Basic and acidic residues-rich tracts occupy residues 227-243 and 251-260; these read TRDR…EPRR and QQFEDRSNEG.

Belongs to the universal ribosomal protein uS3 family. As to quaternary structure, part of the 30S ribosomal subunit. Forms a tight complex with proteins S10 and S14.

Functionally, binds the lower part of the 30S subunit head. Binds mRNA in the 70S ribosome, positioning it for translation. The sequence is that of Small ribosomal subunit protein uS3 from Trichormus variabilis (strain ATCC 29413 / PCC 7937) (Anabaena variabilis).